We begin with the raw amino-acid sequence, 499 residues long: Endoglucanase (499 aa).

An N-terminal signal peptide occupies residues 1 to 29 (MKRSISIFITCLLITLLTMGGMLASPASA). Substrate is bound by residues histidine 65, 69–70 (WY), tyrosine 96, and histidine 131. The active-site Proton donor is glutamate 169. Tyrosine 231 is a binding site for substrate. Glutamate 257 functions as the Nucleophile in the catalytic mechanism. Substrate contacts are provided by residues 263-264 (AS), tryptophan 291, and 296-298 (KQE). The region spanning 350-499 (QENGISVQYR…GKLIWGTEPN (150 aa)) is the CBM3 domain.

It belongs to the glycosyl hydrolase 5 (cellulase A) family.

The catalysed reaction is Endohydrolysis of (1-&gt;4)-beta-D-glucosidic linkages in cellulose, lichenin and cereal beta-D-glucans.. The polypeptide is Endoglucanase (bglC) (Bacillus subtilis).